Consider the following 827-residue polypeptide: Periplasmic nitrate reductase (827 aa).

The tat-type signal signal peptide spans 1–32 (MTLSRRAFIKQTAAATAASAAGVVLPGVDALA). The 4Fe-4S Mo/W bis-MGD-type domain occupies 37 to 93 (LTWSKAPCRFCGTGCGVSVGVKNGKVVATQGDPQAEVNRGLNCVKGYFLSKIMYGQD). Cysteine 44, cysteine 47, cysteine 51, and cysteine 79 together coordinate [4Fe-4S] cluster. Residues lysine 81, glutamine 148, asparagine 173, cysteine 177, 241 to 245 (STFEH), 260 to 262 (QSD), methionine 371, glutamine 375, asparagine 481, 507 to 508 (SD), lysine 530, aspartate 557, and 717 to 726 (TGRVLEHWHS) contribute to the Mo-bis(molybdopterin guanine dinucleotide) site. Tryptophan 793 is a binding site for substrate. Mo-bis(molybdopterin guanine dinucleotide)-binding residues include asparagine 801 and lysine 818.

This sequence belongs to the prokaryotic molybdopterin-containing oxidoreductase family. NasA/NapA/NarB subfamily. In terms of assembly, component of the periplasmic nitrate reductase NapAB complex composed of NapA and NapB. Requires [4Fe-4S] cluster as cofactor. Mo-bis(molybdopterin guanine dinucleotide) serves as cofactor. Post-translationally, predicted to be exported by the Tat system. The position of the signal peptide cleavage has not been experimentally proven.

The protein resides in the periplasm. The enzyme catalyses 2 Fe(II)-[cytochrome] + nitrate + 2 H(+) = 2 Fe(III)-[cytochrome] + nitrite + H2O. In terms of biological role, catalytic subunit of the periplasmic nitrate reductase complex NapAB. Receives electrons from NapB and catalyzes the reduction of nitrate to nitrite. This is Periplasmic nitrate reductase from Paraburkholderia xenovorans (strain LB400).